An 83-amino-acid polypeptide reads, in one-letter code: UPF0248 protein PYRAB10580 (83 aa).

This sequence belongs to the UPF0248 family.

The protein is UPF0248 protein PYRAB10580 of Pyrococcus abyssi (strain GE5 / Orsay).